We begin with the raw amino-acid sequence, 94 residues long: Venom peptide SjAPI (94 aa).

The signal sequence occupies residues 1–24 (MKWGALLCIFGFLAFCSVLDRGLG). Positions 25-30 (WIPDIW) are excised as a propeptide. Disulfide bonds link Cys33/Cys70, Cys43/Cys66, Cys47/Cys62, Cys51/Cys92, and Cys72/Cys86. The 60-residue stretch at 33–92 (CSSKNEEFQQCGSSCPETCANHKNPEPKSCAAVCFVGCVCKPGFIRDDLKGSICVKPEDC) folds into the TIL domain. The protease binding loop stretch occupies residues 63–65 (AAV).

The protein belongs to the serine protease inhibitor-like (TIL domain-containing) family. Expressed by the venom gland.

The protein resides in the secreted. In terms of biological role, recombinant protein inhibits both alpha-chymotrypsin (Ki=97.1 nM) and elastase (Ki=3700 nM). In Scorpiops jendeki (Scorpion), this protein is Venom peptide SjAPI.